We begin with the raw amino-acid sequence, 140 residues long: Large ribosomal subunit protein uL11 (140 aa).

The protein belongs to the universal ribosomal protein uL11 family. Part of the ribosomal stalk of the 50S ribosomal subunit. Interacts with L10 and the large rRNA to form the base of the stalk. L10 forms an elongated spine to which L12 dimers bind in a sequential fashion forming a multimeric L10(L12)X complex. In terms of processing, one or more lysine residues are methylated.

Functionally, forms part of the ribosomal stalk which helps the ribosome interact with GTP-bound translation factors. This chain is Large ribosomal subunit protein uL11, found in Staphylococcus aureus (strain bovine RF122 / ET3-1).